Here is a 330-residue protein sequence, read N- to C-terminus: tRNA U34 carboxymethyltransferase (330 aa).

Carboxy-S-adenosyl-L-methionine contacts are provided by residues lysine 91, tryptophan 105, lysine 110, glycine 130, 152 to 154, 181 to 182, methionine 196, tyrosine 200, and arginine 315; these read DPS and IE.

Belongs to the class I-like SAM-binding methyltransferase superfamily. CmoB family. In terms of assembly, homotetramer.

The enzyme catalyses carboxy-S-adenosyl-L-methionine + 5-hydroxyuridine(34) in tRNA = 5-carboxymethoxyuridine(34) in tRNA + S-adenosyl-L-homocysteine + H(+). Its function is as follows. Catalyzes carboxymethyl transfer from carboxy-S-adenosyl-L-methionine (Cx-SAM) to 5-hydroxyuridine (ho5U) to form 5-carboxymethoxyuridine (cmo5U) at position 34 in tRNAs. This Shewanella sp. (strain ANA-3) protein is tRNA U34 carboxymethyltransferase.